The sequence spans 707 residues: Elongation factor G (707 aa).

Residues 8–297 (ERVRNIGIAA…AVVDYLPSPV (290 aa)) enclose the tr-type G domain. Residues 17-24 (AHIDAGKT), 96-100 (DTPGH), and 150-153 (NKMD) each bind GTP.

Belongs to the TRAFAC class translation factor GTPase superfamily. Classic translation factor GTPase family. EF-G/EF-2 subfamily.

Its subcellular location is the cytoplasm. Its function is as follows. Catalyzes the GTP-dependent ribosomal translocation step during translation elongation. During this step, the ribosome changes from the pre-translocational (PRE) to the post-translocational (POST) state as the newly formed A-site-bound peptidyl-tRNA and P-site-bound deacylated tRNA move to the P and E sites, respectively. Catalyzes the coordinated movement of the two tRNA molecules, the mRNA and conformational changes in the ribosome. This Synechococcus sp. (strain JA-2-3B'a(2-13)) (Cyanobacteria bacterium Yellowstone B-Prime) protein is Elongation factor G.